A 388-amino-acid chain; its full sequence is MYKAQYLWLFGLVLISRSATERTTPKINFTTVVGLKTTPAMRSSSASSLGGSLPMVINTWNFTDANFLAWRILNVTQGGLRQTRNAVVEGCTRCEQQQCDRTVGYGGSPDELGETTLDAMIMDGSSMDVGAVAGLRGIKDAIRVARHVLEHTKHSILVGDLASQFAQAMGFRSESLATPESKAMWMEWTAANCQPNFWRNVHPDPSISCGPYKPKATPLTRWKEDRARTEYSIGHLNHDTIGMIAIDAANNIHAGTSSNGARHKIPGRVGDSPIPGAGAYADNEVGAAVATGDGDIMMRFLPTLLAVEAMRAGKKPAEAAEVGIRRISKHYKDFSGAVIAVDRLGQYGAACYGMTEFPFVVSNPSKTDIPSRQESVKCITGKEAVNVV.

The signal sequence occupies residues 1 to 20; sequence MYKAQYLWLFGLVLISRSAT. Intrachain disulfides connect cysteine 94-cysteine 99 and cysteine 193-cysteine 209. Threonine 240 serves as the catalytic Nucleophile. Substrate is bound by residues 268–271 and 291–294; these read RVGD and TGDG. An intrachain disulfide couples cysteine 351 to cysteine 378.

This sequence belongs to the Ntn-hydrolase family. As to quaternary structure, heterotetramer of two alpha and two beta chains arranged as a dimer of alpha/beta heterodimers. In terms of processing, cleaved into an alpha and beta chain by autocatalysis; this activates the enzyme. The N-terminal residue of the beta subunit is responsible for the nucleophile hydrolase activity.

It carries out the reaction N(4)-(beta-N-acetyl-D-glucosaminyl)-L-asparagine + H2O = N-acetyl-beta-D-glucosaminylamine + L-aspartate + H(+). Cleaves the GlcNAc-Asn bond which joins oligosaccharides to the peptide of asparagine-linked glycoproteins. This chain is Putative N(4)-(beta-N-acetylglucosaminyl)-L-asparaginase GL17147, found in Drosophila persimilis (Fruit fly).